Here is a 229-residue protein sequence, read N- to C-terminus: Putative N-acetylmannosamine-6-phosphate 2-epimerase (229 aa).

This sequence belongs to the NanE family.

It carries out the reaction an N-acyl-D-glucosamine 6-phosphate = an N-acyl-D-mannosamine 6-phosphate. It functions in the pathway amino-sugar metabolism; N-acetylneuraminate degradation; D-fructose 6-phosphate from N-acetylneuraminate: step 3/5. Its function is as follows. Converts N-acetylmannosamine-6-phosphate (ManNAc-6-P) to N-acetylglucosamine-6-phosphate (GlcNAc-6-P). The sequence is that of Putative N-acetylmannosamine-6-phosphate 2-epimerase from Salmonella arizonae (strain ATCC BAA-731 / CDC346-86 / RSK2980).